Reading from the N-terminus, the 347-residue chain is Globoside alpha-1,3-N-acetylgalactosaminyltransferase 1 (347 aa).

Residues M1–R5 lie on the Cytoplasmic side of the membrane. Residues L6–Y26 traverse the membrane as a helical; Signal-anchor for type II membrane protein segment. The Lumenal segment spans residues L27–S347. N108 carries an N-linked (GlcNAc...) asparagine glycan. Substrate-binding positions include F116 to Y121, D206 to D208, and H228 to Y231. D206 and D208 together coordinate Mn(2+). Catalysis depends on E298, which acts as the Nucleophile.

This sequence belongs to the glycosyltransferase 6 family. It depends on Mn(2+) as a cofactor. In terms of tissue distribution, widely expressed. Expressed at higher level in placenta, ovary and peripheral blood leukocyte, whereas it is weakly expressed in liver, thymus, and testis. Expressed in bone marrow erythroid cells.

The protein resides in the golgi apparatus membrane. Its pathway is protein modification; protein glycosylation. Functionally, has lost the ability to synthesize Forssman glycolipid antigen (FORS1/FG). Might have acquired an alternative function in glycosphingolipid metabolism, but it remains to be established. It appears to have drifted more slowly than confirmed pseudogenes in the glycosyltransferase 6 family, suggesting that it has remained under evolutionary pressure. This Homo sapiens (Human) protein is Globoside alpha-1,3-N-acetylgalactosaminyltransferase 1.